A 199-amino-acid polypeptide reads, in one-letter code: DNA dC-&gt;dU-editing enzyme APOBEC-3A (199 aa).

Residues 27–143 enclose the CMP/dCMP-type deaminase domain; the sequence is GRHKTYLCYE…PLYKEALQML (117 aa). A Zn(2+)-binding site is contributed by histidine 70. Glutamate 72 acts as the Proton donor in catalysis. Cysteine 101 and cysteine 106 together coordinate Zn(2+).

Belongs to the cytidine and deoxycytidylate deaminase family. As to quaternary structure, interacts with AGO2. Interacts with TRIB3 (via N-terminus). Zn(2+) is required as a cofactor. As to expression, expressed in peripheral leukocytes with higher expression in CD14-positive phagocytic cells. Highly expressed in keratinocytes and in periphery blood monocytes. Also detected in non-lymphoid tissues including lung and adipose tissues. Found at high levels in colorectal adenocarcinoma, Burkitt's lymphoma and chronic myelogenous leukemia.

The protein localises to the nucleus. It is found in the cytoplasm. It carries out the reaction a 2'-deoxycytidine in single-stranded DNA + H2O + H(+) = a 2'-deoxyuridine in single-stranded DNA + NH4(+). Its function is as follows. DNA deaminase (cytidine deaminase) with restriction activity against viruses, foreign DNA and mobility of retrotransposons. Exhibits antiviral activity against adeno-associated virus (AAV) and human T-cell leukemia virus type 1 (HTLV-1) and may inhibit the mobility of LTR and non-LTR retrotransposons. Selectively targets single-stranded DNA and can deaminate both methylcytosine and cytosine in foreign DNA. Can induce somatic hypermutation in the nuclear and mitochondrial DNA. May also play a role in the epigenetic regulation of gene expression through the process of active DNA demethylation. This Homo sapiens (Human) protein is DNA dC-&gt;dU-editing enzyme APOBEC-3A (APOBEC3A).